The sequence spans 502 residues: Mannitol 2-dehydrogenase (502 aa).

An NAD(+)-binding site is contributed by isoleucine 37–alanine 48.

The protein belongs to the mannitol dehydrogenase family. In terms of assembly, monomer.

The catalysed reaction is D-mannitol + NAD(+) = D-fructose + NADH + H(+). Functionally, catalyzes the NAD(H)-dependent interconversion of D-fructose and D-mannitol in the mannitol metabolic pathway. This is Mannitol 2-dehydrogenase from Aspergillus terreus (strain NIH 2624 / FGSC A1156).